The chain runs to 463 residues: Na(+)/H(+) antiporter NhaA 3 (463 aa).

11 consecutive transmembrane segments (helical) span residues 28-48 (FLAT…AALL), 79-99 (LHHW…GLEI), 114-134 (IAVP…IYFV), 144-164 (GWGI…ALFG), 173-193 (LFLL…VGIF), 196-216 (DHLN…ILGL), 232-252 (LVLW…GVLV), 305-325 (VLHP…NAGV), 344-364 (VAAA…VAAI), 377-397 (YGHL…SLFI), and 413-433 (IGIL…LRVL). Positions 444–463 (TDEPVPRLPPRPWRAPVPAK) are disordered. Over residues 449–463 (PRLPPRPWRAPVPAK) the composition is skewed to pro residues.

It belongs to the NhaA Na(+)/H(+) (TC 2.A.33) antiporter family.

Its subcellular location is the cell membrane. The catalysed reaction is Na(+)(in) + 2 H(+)(out) = Na(+)(out) + 2 H(+)(in). Na(+)/H(+) antiporter that extrudes sodium in exchange for external protons. In Frankia alni (strain DSM 45986 / CECT 9034 / ACN14a), this protein is Na(+)/H(+) antiporter NhaA 3.